The sequence spans 229 residues: Flagellar L-ring protein 1 (229 aa).

A signal peptide spans 1–18 (MYLRKISAPLMTMLLLNG). The N-palmitoyl cysteine moiety is linked to residue Cys-19. Residue Cys-19 is the site of S-diacylglycerol cysteine attachment.

It belongs to the FlgH family. The basal body constitutes a major portion of the flagellar organelle and consists of four rings (L,P,S, and M) mounted on a central rod.

Its subcellular location is the cell outer membrane. The protein resides in the bacterial flagellum basal body. Functionally, assembles around the rod to form the L-ring and probably protects the motor/basal body from shearing forces during rotation. The chain is Flagellar L-ring protein 1 (flgH1) from Yersinia pseudotuberculosis serotype I (strain IP32953).